A 329-amino-acid chain; its full sequence is Cytosolic sulfotransferase 6 (329 aa).

74–79 contacts 3'-phosphoadenylyl sulfate; sequence KCGTTW. The Proton acceptor role is filled by His-140. 3'-phosphoadenylyl sulfate-binding positions include Arg-162, Ser-170, and 295–297; that span reads RKG.

The protein belongs to the sulfotransferase 1 family.

The protein resides in the cytoplasm. Functionally, sulfotransferase that utilizes 3'-phospho-5'-adenylyl sulfate (PAPS) as sulfonate donor. The protein is Cytosolic sulfotransferase 6 (SOT6) of Arabidopsis thaliana (Mouse-ear cress).